The chain runs to 120 residues: Eukaryotic translation initiation factor 4E-binding protein 2 (120 aa).

Phosphothreonine; by MTOR occurs at positions 37 and 46. Residues 54–60 (YDRKFLL) carry the YXXXXLphi motif motif. S65 bears the Phosphoserine; by MTOR mark. T70 is subject to Phosphothreonine; by MTOR. S83 carries the post-translational modification Phosphoserine. Deamidated asparagine is present on residues N99 and N102. A TOS motif motif is present at residues 116 to 120 (FEMDI).

This sequence belongs to the eIF4E-binding protein family. As to quaternary structure, hypophosphorylated EIF4EBP2 interacts with EIF4E; phosphorylation of EIF4EBP2 by mTORC1 causes dissociation of the complex allowing EIF4G1/EIF4G3 to bind and consequent initiation of translation. Interacts (via TOS motif) with RPTOR; promoting phosphorylation by mTORC1. Interacts with PCMT1; required to prevent isoaspartate accumulation and convert isoaspartate to Asp. In terms of processing, phosphorylation at Thr-37, Thr-46, Ser-65, Thr-70 and Ser-83 is mediated by MTOR and corresponds to the hyperphosphorylated form: it abolishes binding to EIF4E by inducing folding of intrinsically disordered regions. First phosphorylated at Thr-37 and Thr-46 by MTOR, inducing folding of region encompassing residues from Pro-18 to Arg-62 of into a four-stranded beta-domain that sequesters the helical YXXXXLPhi motif into a partly buried beta-strand, blocking accessibility to EIF4E. Protein phosphorylated at Thr-37 and Thr-46 is however unstable and subsequent phosphorylation at Ser-65, Thr-70 and Ser-83 is required to stabilize the fold, decreasing affinity for EIF4E by a factor of 4000. Phosphorylated in response to insulin, EGF and PDGF. Post-translationally, deamidated at Asn-99 and Asn-102 to aspartate (Asp) in brain. Deamidation promotes interaction with RPTOR, subsequent phosphorylation by mTORC1 and increased translation, leading to impair kinetics of excitatory synaptic transmission. Deamidation takes place during postnatal development, when the PI3K-Akt-mTOR signaling is reduced, suggesting it acts as a compensatory mechanism to promote translation despite attenuated PI3K-Akt-mTOR signaling in neuron development. Deamidation converts Asn residues into a mixture of Asp and isoaspartate; interactions with PCMT1 is required to prevent isoaspartate accumulation and convert isoaspartate to Asp. In terms of tissue distribution, enriched in brain.

It is found in the cytoplasm. The protein resides in the nucleus. Functionally, repressor of translation initiation involved in synaptic plasticity, learning and memory formation. Regulates EIF4E activity by preventing its assembly into the eIF4F complex: hypophosphorylated form of EIF4EBP2 competes with EIF4G1/EIF4G3 and strongly binds to EIF4E, leading to repress translation. In contrast, hyperphosphorylated form dissociates from EIF4E, allowing interaction between EIF4G1/EIF4G3 and EIF4E, leading to initiation of translation. EIF4EBP2 is enriched in brain and acts as a regulator of synapse activity and neuronal stem cell renewal via its ability to repress translation initiation. Mediates the regulation of protein translation by hormones, growth factors and other stimuli that signal through the MAP kinase and mTORC1 pathways. This is Eukaryotic translation initiation factor 4E-binding protein 2 from Mus musculus (Mouse).